Reading from the N-terminus, the 353-residue chain is MWLLEKAGYKVGAAEPAARWAPSGLFSKRRAPGPPTSACPNVLTPDRIPQFFIPPRLPDPGGAVPAARRHVAGRGLPATCSLPHLAGREGWAFLPESPHTRRRESLFHGPPPAPAGGLPAAQSRLHVSAPDLRLCRAPDSDTASSPDSSPFGSPRPGLGRRRVSRPHSLSPEKASSADTSPHSPRRAGPPTPPLFHLDFLCCQLRPTRESVLRLGPRGGQLRLSTEYQAGPGRLRLRLVSAEGLPRPRSRPGSGGGGCCVVLRLRPRVRPREQQSRVVKCSANPIFNEDFFFDGLGPPDLAARSLRAKVLDRGAGLRRDVLLGECETPLIALLPPLGGGLGPGSSLAPTHLSL.

Positions 135–191 (CRAPDSDTASSPDSSPFGSPRPGLGRRRVSRPHSLSPEKASSADTSPHSPRRAGPPT) are disordered. The segment covering 140–150 (SDTASSPDSSP) has biased composition (low complexity). A C2 domain is found at 217 to 343 (RGGQLRLSTE…PPLGGGLGPG (127 aa)).

In Homo sapiens (Human), this protein is C2 calcium-dependent domain-containing protein 4D (C2CD4D).